Here is a 59-residue protein sequence, read N- to C-terminus: Conotoxin ViVA (59 aa).

The signal sequence occupies residues 1–19 (MRCVPVFIILLLLIPSASS). A propeptide spanning residues 20 to 46 (AAVQPKTEKDDVPLASVHDSALRILSR) is cleaved from the precursor. Gln-47 is modified (pyrrolidone carboxylic acid). 2 cysteine pairs are disulfide-bonded: Cys-48–Cys-55 and Cys-49–Cys-56. The residue at position 58 (Ile-58) is an Isoleucine amide.

The protein belongs to the conotoxin T superfamily. In terms of tissue distribution, expressed by the venom duct.

The protein localises to the secreted. The chain is Conotoxin ViVA from Conus virgo (Virgin cone).